We begin with the raw amino-acid sequence, 163 residues long: Large ribosomal subunit protein uL11 (163 aa).

Positions 1 to 25 (MAGTIEVLVAGGQADPGPPLGPELG) are disordered.

It belongs to the universal ribosomal protein uL11 family. In terms of assembly, part of the ribosomal stalk of the 50S ribosomal subunit. Interacts with L10 and the large rRNA to form the base of the stalk. L10 forms an elongated spine to which L12 dimers bind in a sequential fashion forming a multimeric L10(L12)X complex.

Its function is as follows. Forms part of the ribosomal stalk which helps the ribosome interact with GTP-bound translation factors. The polypeptide is Large ribosomal subunit protein uL11 (Natronomonas pharaonis (strain ATCC 35678 / DSM 2160 / CIP 103997 / JCM 8858 / NBRC 14720 / NCIMB 2260 / Gabara) (Halobacterium pharaonis)).